We begin with the raw amino-acid sequence, 464 residues long: MDHDLEIFPLLSYVLHHSDPASHAPPSLAIQQSLANRYPLLTNPYVISSLIESIPSTITQTLFVFGSLGPRPDPLAVSSARSKIREIKENDSLSPEDAAKEEQVYAAVVSLEEVHEGYEKQLRDLEEEIGRVYASAVESLSGGDEVNEEVLAVIKDAEDGGVVERIDLSDHELKLLPDALGKIVGLVSLNVSRNNLRFLPDTISGLEKLEELDLSSNRLVFLPDSIGLLLNLRILNVTGNKLTLLPESIAQCRSLVELDASFNNLTSLPANFGYGLLNLERLSIQLNKIRFFPNSICEMRSLRYLDAHMNEIHGLPIAIGRLTNLEVMNLSSNFSDLIELPDTISDLANLRELDLSNNQIRVLPDSFFRLEKLEKLNLDQNPLEYPPQEMVNQSAEAVREFMRKRWEEMVEEEQLRSVIEAEKQQGGATGWLSWGSSIVTSLFSGGTHGGAAKKPKNSFLDEQL.

The stretch at 106–138 (AAVVSLEEVHEGYEKQLRDLEEEIGRVYASAVE) forms a coiled coil. LRR repeat units lie at residues 160–183 (GGVVERIDLSDHELKLLPDALGKI), 184–206 (VGLVSLNVSRNNLRFLPDTISGL), 207–230 (EKLEELDLSSNRLVFLPDSIGLLL), 232–252 (LRILNVTGNKLTLLPESIAQC), 254–275 (SLVELDASFNNLTSLPANFGYG), 276–299 (LLNLERLSIQLNKIRFFPNSICEM), 301–322 (SLRYLDAHMNEIHGLPIAIGRL), 323–347 (TNLEVMNLSSNFSDLIELPDTISDL), 348–370 (ANLRELDLSNNQIRVLPDSFFRL), and 372–393 (KLEKLNLDQNPLEYPPQEMVNQ). The short motif at 398–406 (VREFMRKRW) is the GVYW; degenerate element.

Belongs to the SHOC2 family. In terms of tissue distribution, widely expressed.

In terms of biological role, leucine-rich repeat protein that likely mediates protein interactions, possibly in the context of signal transduction. The sequence is that of Plant intracellular Ras-group-related LRR protein 3 (PIRL3) from Arabidopsis thaliana (Mouse-ear cress).